A 514-amino-acid chain; its full sequence is 2,3-bisphosphoglycerate-independent phosphoglycerate mutase (514 aa).

D14 and S64 together coordinate Mn(2+). S64 acts as the Phosphoserine intermediate in catalysis. Substrate is bound by residues H125, 155-156, R187, R193, 263-266, and K336; these read RD and RADR. D403, H407, D444, H445, and H463 together coordinate Mn(2+).

It belongs to the BPG-independent phosphoglycerate mutase family. As to quaternary structure, monomer. It depends on Mn(2+) as a cofactor.

It catalyses the reaction (2R)-2-phosphoglycerate = (2R)-3-phosphoglycerate. The protein operates within carbohydrate degradation; glycolysis; pyruvate from D-glyceraldehyde 3-phosphate: step 3/5. In terms of biological role, catalyzes the interconversion of 2-phosphoglycerate and 3-phosphoglycerate. This Shigella dysenteriae serotype 1 (strain Sd197) protein is 2,3-bisphosphoglycerate-independent phosphoglycerate mutase.